Here is a 506-residue protein sequence, read N- to C-terminus: MDAHAITCASWNMLKAQLEAGAISSLQIVRAFRNVYEEDTRSASPLGALVEFFSDAEEHARTADNLRASCAQSTKTAGANGGSVSGKPLLGLPFAVKDNISVKGKHCTCGSKLLADYRAPYDATVVARLRAAGAIPLGRTNMDEFAMGSSTEYSVYGPTRNPRDRSRTSGGSSGGSAAAVAGGQAPFALGTETGGSVRLPAAYCGLYGLKPTYGLLSRYGVVAFGSSLDQIGFFATCIDDIALALSVTSGKDLYDSTSTCPPPATGRHAVSHHLAPFSAHECSILRAAVPRELVDAPGVHPDVSAQFQRFLTWLRAQNVQVEEVTLPALQAAVPVYYLVATAEAASNLARFDGIRYGQRGDTDALLENYYRAVRTSGFGPEVQRRIIVGNYVLSRHFSGDYYRTSVRVRSRIEQECTQLLCSYHFIVCPTAATGAFPLGERIHDPLAMYCSDLFTTFVNLARLPALSVPVGTSGTGLPIGIQIIGSQWQECAVLRLAKRWEEAPHV.

Catalysis depends on charge relay system residues Lys-97 and Ser-172. The segment at 153-177 is disordered; that stretch reads YSVYGPTRNPRDRSRTSGGSSGGSA. Ser-196 functions as the Acyl-ester intermediate in the catalytic mechanism.

This sequence belongs to the amidase family. GatA subfamily. As to quaternary structure, heterotrimer of A, B and C subunits.

It catalyses the reaction L-glutamyl-tRNA(Gln) + L-glutamine + ATP + H2O = L-glutaminyl-tRNA(Gln) + L-glutamate + ADP + phosphate + H(+). In terms of biological role, allows the formation of correctly charged Gln-tRNA(Gln) through the transamidation of misacylated Glu-tRNA(Gln) in organisms which lack glutaminyl-tRNA synthetase. The reaction takes place in the presence of glutamine and ATP through an activated gamma-phospho-Glu-tRNA(Gln). In Treponema pallidum (strain Nichols), this protein is Glutamyl-tRNA(Gln) amidotransferase subunit A (gatA).